We begin with the raw amino-acid sequence, 207 residues long: Large ribosomal subunit protein uL4 (207 aa).

The interval 59–78 is disordered; the sequence is GSGKKPFKQKGTGQARQGCK.

Belongs to the universal ribosomal protein uL4 family. As to quaternary structure, part of the 50S ribosomal subunit.

In terms of biological role, one of the primary rRNA binding proteins, this protein initially binds near the 5'-end of the 23S rRNA. It is important during the early stages of 50S assembly. It makes multiple contacts with different domains of the 23S rRNA in the assembled 50S subunit and ribosome. Its function is as follows. Forms part of the polypeptide exit tunnel. This Geotalea daltonii (strain DSM 22248 / JCM 15807 / FRC-32) (Geobacter daltonii) protein is Large ribosomal subunit protein uL4.